Here is a 147-residue protein sequence, read N- to C-terminus: Myosin-ID light chain (147 aa).

EF-hand domains are found at residues 8-43 (EAQS…LGQN), 79-114 (FDEK…LGER), and 115-147 (LPEE…MLKK). Residues Asp-21, Asn-23, Asp-25, Lys-27, and Glu-32 each coordinate Ca(2+).

In terms of assembly, myosin I is a dimer of a heavy and a light chain. Inability to self-assemble into filaments. Interacts with myoD. Does not interact with myoB or myoC.

It is found in the cytoplasm. Functionally, functions as the light chain for myosin-D. Has low affinity for calcium. This Dictyostelium discoideum (Social amoeba) protein is Myosin-ID light chain (mlcD).